The chain runs to 357 residues: Arginine kinase (357 aa).

At Ala-2 the chain carries N-acetylalanine. One can recognise a Phosphagen kinase N-terminal domain in the interval 9–91 (KLDEGFKKLE…FDPIIEDYHK (83 aa)). 64-68 (GVGVY) is an L-arginine binding site. Residues 119–356 (FVISTRVRCG…LELIKIEKEM (238 aa)) enclose the Phosphagen kinase C-terminal domain. Residues 122-126 (STRVR) and His-185 each bind ATP. Glu-225 is a binding site for L-arginine. Arg-229 serves as a coordination point for ATP. Cys-271 serves as a coordination point for L-arginine. ATP is bound by residues 280 to 284 (RASVH) and 309 to 314 (RGTRGE). Glu-314 contacts L-arginine.

It belongs to the ATP:guanido phosphotransferase family.

It carries out the reaction L-arginine + ATP = N(omega)-phospho-L-arginine + ADP + H(+). The chain is Arginine kinase from Eriocheir sinensis (Chinese mitten crab).